The sequence spans 392 residues: Formate-dependent phosphoribosylglycinamide formyltransferase (392 aa).

Residues 22–23 (EL) and Glu82 contribute to the N(1)-(5-phospho-beta-D-ribosyl)glycinamide site. Residues Arg114, Lys155, 160–165 (SSGKGQ), 195–198 (EGLV), and Glu203 each bind ATP. An ATP-grasp domain is found at 119–308 (RLAAETLSLP…EFALHVRAFL (190 aa)). Mg(2+) contacts are provided by Glu267 and Glu279. N(1)-(5-phospho-beta-D-ribosyl)glycinamide is bound by residues Asp286, Lys355, and 362–363 (RR).

Belongs to the PurK/PurT family. In terms of assembly, homodimer.

The catalysed reaction is N(1)-(5-phospho-beta-D-ribosyl)glycinamide + formate + ATP = N(2)-formyl-N(1)-(5-phospho-beta-D-ribosyl)glycinamide + ADP + phosphate + H(+). It functions in the pathway purine metabolism; IMP biosynthesis via de novo pathway; N(2)-formyl-N(1)-(5-phospho-D-ribosyl)glycinamide from N(1)-(5-phospho-D-ribosyl)glycinamide (formate route): step 1/1. Its function is as follows. Involved in the de novo purine biosynthesis. Catalyzes the transfer of formate to 5-phospho-ribosyl-glycinamide (GAR), producing 5-phospho-ribosyl-N-formylglycinamide (FGAR). Formate is provided by PurU via hydrolysis of 10-formyl-tetrahydrofolate. The sequence is that of Formate-dependent phosphoribosylglycinamide formyltransferase from Sodalis glossinidius (strain morsitans).